The sequence spans 110 residues: Nitrogenase-stabilizing/protective protein NifW (110 aa).

This sequence belongs to the NifW family. In terms of assembly, homotrimer; associates with NifD.

Its function is as follows. May protect the nitrogenase Fe-Mo protein from oxidative damage. In Acidithiobacillus ferrooxidans (strain ATCC 23270 / DSM 14882 / CIP 104768 / NCIMB 8455) (Ferrobacillus ferrooxidans (strain ATCC 23270)), this protein is Nitrogenase-stabilizing/protective protein NifW.